The primary structure comprises 691 residues: Probable serine/threonine-protein kinase pXi (691 aa).

Residues 18–263 (YEIGSQIGNG…IDQTLKHPWI (246 aa)) enclose the Protein kinase domain. ATP contacts are provided by residues 24-32 (IGNGKFAQV) and Lys-47. Asp-137 (proton acceptor) is an active-site residue. Disordered regions lie at residues 314–350 (TPIKSNDENNNNNNNNNNNNNNNEILDKKSNENENEN), 420–447 (ENDSSSSETYSSSSPIENGGGGGDKFTS), 510–536 (QHNNNINNNNNNINNGGSTSINNGNGT), and 600–620 (GGSGCSSSSDESTGGSFKKDK). The span at 322-336 (NNNNNNNNNNNNNNN) shows a compositional bias: low complexity. Basic and acidic residues predominate over residues 338-350 (ILDKKSNENENEN). Low complexity-rich tracts occupy residues 423–433 (SSSSETYSSSS), 512–536 (NNNINNNNNNINNGGSTSINNGNGT), and 600–615 (GGSGCSSSSDESTGGS). Positions 642 to 691 (PKETMDKLASVLSNYKQKNQEKSLKVKYEKQKDKYKKLKSQLKKDKSLLK) form a coiled coil.

This sequence belongs to the protein kinase superfamily. CAMK Ser/Thr protein kinase family.

The catalysed reaction is L-seryl-[protein] + ATP = O-phospho-L-seryl-[protein] + ADP + H(+). It carries out the reaction L-threonyl-[protein] + ATP = O-phospho-L-threonyl-[protein] + ADP + H(+). The polypeptide is Probable serine/threonine-protein kinase pXi (pXi) (Dictyostelium discoideum (Social amoeba)).